A 290-amino-acid chain; its full sequence is 33 kDa chaperonin (290 aa).

Cystine bridges form between Cys235–Cys237 and Cys268–Cys271.

Belongs to the HSP33 family. Post-translationally, under oxidizing conditions two disulfide bonds are formed involving the reactive cysteines. Under reducing conditions zinc is bound to the reactive cysteines and the protein is inactive.

The protein resides in the cytoplasm. Its function is as follows. Redox regulated molecular chaperone. Protects both thermally unfolding and oxidatively damaged proteins from irreversible aggregation. Plays an important role in the bacterial defense system toward oxidative stress. The chain is 33 kDa chaperonin from Streptococcus equi subsp. zooepidemicus (strain H70).